The following is a 501-amino-acid chain: Atypical kinase COQ8, mitochondrial (501 aa).

A mitochondrion-targeting transit peptide spans 1-29 (MVTNMVKLRNLRRLYCSSRLLRTIQNGRI). The tract at residues 41–69 (YTTKSAKEGEENVERKHEEEKKDTLKSSS) is disordered. Residues 45 to 65 (SAKEGEENVERKHEEEKKDTL) show a composition bias toward basic and acidic residues. A KxGQ motif motif is present at residues 134 to 137 (KIGQ). A Protein kinase domain is found at 188–501 (KFDKIPMAAA…LFKEIFAYKV (314 aa)). Residues 195–198 (AAAS) carry the AAAS motif motif. Residues Ser-198, Lys-216, and 303–306 (MTRM) contribute to the ATP site. Asp-346 acts as the Proton acceptor in catalysis. Residues Asn-351 and Asp-365 each contribute to the ATP site.

Belongs to the protein kinase superfamily. ADCK protein kinase family. In terms of assembly, forms homopolymers. Predominantly associated with a complex of about 500 kDa.

It is found in the mitochondrion inner membrane. The protein operates within cofactor biosynthesis; ubiquinone biosynthesis. Atypical kinase involved in the biosynthesis of coenzyme Q, also named ubiquinone, an essential lipid-soluble electron transporter for aerobic cellular respiration. Its substrate specificity is still unclear: may act as a protein kinase that mediates phosphorylation of COQ3, COQ5 and/or COQ7. According to other reports, acts as a small molecule kinase, possibly a lipid kinase that phosphorylates a prenyl lipid in the ubiquinone biosynthesis pathway, as suggested by its ability to bind coenzyme Q lipid intermediates. The polypeptide is Atypical kinase COQ8, mitochondrial (COQ8) (Saccharomyces cerevisiae (strain ATCC 204508 / S288c) (Baker's yeast)).